Reading from the N-terminus, the 230-residue chain is Phosphatidate cytidylyltransferase (230 aa).

6 helical membrane-spanning segments follow: residues 33 to 53 (FVIA…LVGT), 67 to 87 (IPDL…LIFL), 95 to 115 (WLIM…MIGG), 133 to 153 (WSGL…VSFI), 167 to 187 (IYLF…DLFI), and 206 to 226 (HGGV…LFLM).

This sequence belongs to the CDS family.

The protein localises to the cell membrane. The enzyme catalyses a 1,2-diacyl-sn-glycero-3-phosphate + CTP + H(+) = a CDP-1,2-diacyl-sn-glycerol + diphosphate. Its pathway is phospholipid metabolism; CDP-diacylglycerol biosynthesis; CDP-diacylglycerol from sn-glycerol 3-phosphate: step 3/3. The chain is Phosphatidate cytidylyltransferase (cdsA) from Rickettsia conorii (strain ATCC VR-613 / Malish 7).